The sequence spans 157 residues: Small ribosomal subunit protein uS7 (157 aa).

It belongs to the universal ribosomal protein uS7 family. Part of the 30S ribosomal subunit. Contacts proteins S9 and S11.

One of the primary rRNA binding proteins, it binds directly to 16S rRNA where it nucleates assembly of the head domain of the 30S subunit. Is located at the subunit interface close to the decoding center, probably blocks exit of the E-site tRNA. This Caldicellulosiruptor bescii (strain ATCC BAA-1888 / DSM 6725 / KCTC 15123 / Z-1320) (Anaerocellum thermophilum) protein is Small ribosomal subunit protein uS7.